A 754-amino-acid polypeptide reads, in one-letter code: Exocyst complex component EXO84A (754 aa).

Disordered regions lie at residues 514-540 (RILP…EQRE) and 734-754 (GHGE…YTSN). The segment covering 518–527 (QGTSQSTPRR) has biased composition (polar residues). The segment covering 528 to 540 (GSSDRQNRPEQRE) has biased composition (basic and acidic residues). Positions 741–754 (TSPSVSSAKSYTSN) are enriched in polar residues.

The protein belongs to the EXO84 family. In terms of assembly, the exocyst complex is composed of SEC3, SEC5, SEC6, SEC8, SEC10, EXO70A1 and EXO84.

Component of the exocyst complex involved in the docking of exocytic vesicles with fusion sites on the plasma membrane during regulated or polarized secretion. Involved in polarized cell growth and organ morphogenesis. During cytokinesis, involved in cell plate initiation, cell plate maturation and formation of new primary cell wall. This chain is Exocyst complex component EXO84A (EXO84A), found in Arabidopsis thaliana (Mouse-ear cress).